The primary structure comprises 271 residues: MDNRPIGFLDSGVGGLTVVRELKRQLPHESIVYIGDSARAPYGPRPAGQIREYTWQLVKFLLTKDVKMIVIACNTATAVVWEEIKESLDIPVLGVVLPGSSAAIKSSRSGQIGVIGTPMTISSNIYEQKIKRLAPQMNVLSLSCPRFAPIVESNEINSSVAKKIVYESMAPLVDRVDTLVLGCTHYPLLRPIIQNVMGLSVKLIDSGAETVRDVSVLLNYFEINRSREVKDKTEEYYTTASVLGFKEIAEQWLGEEVTVQHVDLDKELEND.

Substrate-binding positions include Asp10–Ser11 and Tyr42–Gly43. Catalysis depends on Cys73, which acts as the Proton donor/acceptor. Asn74–Thr75 provides a ligand contact to substrate. The active-site Proton donor/acceptor is the Cys183. Thr184 to His185 is a substrate binding site.

Belongs to the aspartate/glutamate racemases family.

The enzyme catalyses L-glutamate = D-glutamate. It participates in cell wall biogenesis; peptidoglycan biosynthesis. Functionally, provides the (R)-glutamate required for cell wall biosynthesis. This is Glutamate racemase from Streptococcus thermophilus (strain CNRZ 1066).